A 317-amino-acid polypeptide reads, in one-letter code: tRNA dimethylallyltransferase (317 aa).

16–23 (GPTASGKS) lines the ATP pocket. 18–23 (TASGKS) contacts substrate. Interaction with substrate tRNA stretches follow at residues 41–44 (DSAQ), 165–169 (QRIQR), and 247–252 (RCVGYR).

Belongs to the IPP transferase family. As to quaternary structure, monomer. Mg(2+) is required as a cofactor.

The catalysed reaction is adenosine(37) in tRNA + dimethylallyl diphosphate = N(6)-dimethylallyladenosine(37) in tRNA + diphosphate. Catalyzes the transfer of a dimethylallyl group onto the adenine at position 37 in tRNAs that read codons beginning with uridine, leading to the formation of N6-(dimethylallyl)adenosine (i(6)A). This chain is tRNA dimethylallyltransferase, found in Nitrosomonas eutropha (strain DSM 101675 / C91 / Nm57).